We begin with the raw amino-acid sequence, 420 residues long: Hemocyanin 2-c chain (420 aa).

A compositionally biased stretch (basic residues) spans 1-12 (DFGHSKKIRKNV). The tract at residues 1 to 20 (DFGHSKKIRKNVHSLTAEEQ) is disordered. Residue histidine 46 coordinates Cu cation. Residues cysteine 52 and cysteine 63 are joined by a disulfide bond. 5 residues coordinate Cu cation: histidine 66, histidine 73, histidine 185, histidine 189, and histidine 216. 2 cysteine pairs are disulfide-bonded: cysteine 175/cysteine 242 and cysteine 335/cysteine 342.

Post-translationally, O-glycosylated. Hemolymph.

It localises to the secreted. Its subcellular location is the extracellular space. Functionally, hemocyanins are copper-containing oxygen carriers occurring freely dissolved in the hemolymph of many mollusks and arthropods. The chain is Hemocyanin 2-c chain from Megathura crenulata (Giant keyhole limpet).